The sequence spans 637 residues: Biosynthetic arginine decarboxylase (637 aa).

At Lys101 the chain carries N6-(pyridoxal phosphate)lysine. 286 to 296 (FDVGGGLAVDY) contacts substrate.

The protein belongs to the Orn/Lys/Arg decarboxylase class-II family. SpeA subfamily. Mg(2+) is required as a cofactor. It depends on pyridoxal 5'-phosphate as a cofactor.

The catalysed reaction is L-arginine + H(+) = agmatine + CO2. The protein operates within amine and polyamine biosynthesis; agmatine biosynthesis; agmatine from L-arginine: step 1/1. Functionally, catalyzes the biosynthesis of agmatine from arginine. This chain is Biosynthetic arginine decarboxylase, found in Shewanella halifaxensis (strain HAW-EB4).